Consider the following 223-residue polypeptide: Neurotrophic factor BDNF precursor form (223 aa).

Residues 1 to 5 (SCMKA) form the signal peptide. The propeptide occupies 6 to 114 (APMKEVSIRG…AANMSMRVRR (109 aa)). Asparagine 107 carries N-linked (GlcNAc...) asparagine glycosylation. 2 cysteine pairs are disulfide-bonded: cysteine 127/cysteine 194 and cysteine 172/cysteine 223.

This sequence belongs to the NGF-beta family.

The protein resides in the secreted. Promotes the survival of neuronal populations that are all located either in the central nervous system or directly connected to it. This chain is Neurotrophic factor BDNF precursor form (BDNF), found in Calabaria reinhardtii (Calabar boa).